Here is a 294-residue protein sequence, read N- to C-terminus: ATP synthase gamma chain (294 aa).

The protein belongs to the ATPase gamma chain family. In terms of assembly, F-type ATPases have 2 components, CF(1) - the catalytic core - and CF(0) - the membrane proton channel. CF(1) has five subunits: alpha(3), beta(3), gamma(1), delta(1), epsilon(1). CF(0) has three main subunits: a, b and c.

It is found in the cell inner membrane. In terms of biological role, produces ATP from ADP in the presence of a proton gradient across the membrane. The gamma chain is believed to be important in regulating ATPase activity and the flow of protons through the CF(0) complex. In Mesorhizobium japonicum (strain LMG 29417 / CECT 9101 / MAFF 303099) (Mesorhizobium loti (strain MAFF 303099)), this protein is ATP synthase gamma chain.